The chain runs to 95 residues: MLLTMNLQLFAHKKGGGSTSNGRDSESKRLGAKSADGQTVTGGSILYRQRGTKIYPGVNVGIGGDDTLFAKVDGVVRFERKGRDKKQVSVYPVAN.

A propeptide spanning residues 1 to 10 is cleaved from the precursor; that stretch reads MLLTMNLQLF. The interval 12–38 is disordered; that stretch reads HKKGGGSTSNGRDSESKRLGAKSADGQ.

It belongs to the bacterial ribosomal protein bL27 family. In terms of processing, the N-terminus is cleaved by ribosomal processing cysteine protease Prp.

This is Large ribosomal subunit protein bL27 from Enterococcus faecalis (strain ATCC 700802 / V583).